The following is a 689-amino-acid chain: Elongation factor G 1 (689 aa).

Residues 7-282 (DQVRTIGIIS…AVVDFLPSPL (276 aa)) enclose the tr-type G domain. GTP contacts are provided by residues 16-23 (SHIDAGKT), 80-84 (DTPGH), and 134-137 (NKMD).

It belongs to the TRAFAC class translation factor GTPase superfamily. Classic translation factor GTPase family. EF-G/EF-2 subfamily.

The protein localises to the cytoplasm. Its function is as follows. Catalyzes the GTP-dependent ribosomal translocation step during translation elongation. During this step, the ribosome changes from the pre-translocational (PRE) to the post-translocational (POST) state as the newly formed A-site-bound peptidyl-tRNA and P-site-bound deacylated tRNA move to the P and E sites, respectively. Catalyzes the coordinated movement of the two tRNA molecules, the mRNA and conformational changes in the ribosome. In Geobacter sulfurreducens (strain ATCC 51573 / DSM 12127 / PCA), this protein is Elongation factor G 1.